The chain runs to 573 residues: Membrane protein insertase YidC (573 aa).

6 consecutive transmembrane segments (helical) span residues 6–26 (VFLI…WGKD), 355–375 (FSIM…LHSF), 379–399 (WGWA…PLSA), 446–466 (GGCL…WVLV), 488–508 (PYFI…KLTP), and 524–544 (PLVF…YWVV).

The protein belongs to the OXA1/ALB3/YidC family. Type 1 subfamily. As to quaternary structure, interacts with the Sec translocase complex via SecD. Specifically interacts with transmembrane segments of nascent integral membrane proteins during membrane integration.

It is found in the cell inner membrane. Its function is as follows. Required for the insertion and/or proper folding and/or complex formation of integral membrane proteins into the membrane. Involved in integration of membrane proteins that insert both dependently and independently of the Sec translocase complex, as well as at least some lipoproteins. Aids folding of multispanning membrane proteins. The polypeptide is Membrane protein insertase YidC (Xanthomonas campestris pv. campestris (strain ATCC 33913 / DSM 3586 / NCPPB 528 / LMG 568 / P 25)).